A 725-amino-acid chain; its full sequence is Phosphatase and actin regulator 4A (725 aa).

Polar residues predominate over residues 1 to 12 (MGQGASTQTLNP). Residues 1 to 597 (MGQGASTQTL…SSTWNNKEQW (597 aa)) are disordered. Over residues 55 to 64 (KPWKWRKKKT) the composition is skewed to basic residues. Basic and acidic residues-rich tracts occupy residues 65–100 (SDKF…KDIP), 124–147 (GDRK…GERK), and 155–164 (KRNDGTERMT). The RPEL 1 repeat unit spans residues 75-100 (LVLERKMSVRKPREELIERGLLKDIP). Residues 166–177 (MIQSFQKMSLMQ) show a composition bias toward polar residues. The span at 212–221 (VIAAPSSAEP) shows a compositional bias: low complexity. Residues 222–235 (APVPPPPIAKPPPR) show a composition bias toward pro residues. Low complexity-rich tracts occupy residues 265–276 (PAHTTPATVSTH) and 292–313 (PAHV…LLKQ). Residues 359–368 (TPVTKRNSGD) show a composition bias toward polar residues. Residues 374-384 (PEPPPPAPTSV) show a composition bias toward pro residues. Over residues 385–401 (PIPAAAPISAPPSTQSD) the composition is skewed to low complexity. Pro residues predominate over residues 402 to 417 (PPSPTTEPPSQPPPLP). The span at 497–510 (QKPELEPRSRRGLV) shows a compositional bias: basic and acidic residues. Acidic residues-rich tracts occupy residues 522–536 (AGSE…ESDS) and 545–554 (DNEEDDDEED). Over residues 567–585 (KDTLALKLERQQEKEKSQE) the composition is skewed to basic and acidic residues. RPEL repeat units follow at residues 606–631 (TALT…LAKN) and 644–669 (RRLT…RFHE).

Belongs to the phosphatase and actin regulator family. In terms of assembly, binds ppp1ca and actin.

The protein localises to the cytoplasm. Its subcellular location is the cell projection. It localises to the lamellipodium. In terms of biological role, regulator of protein phosphatase 1 (PP1) required for neural tube and optic fissure closure, and enteric neural crest cell (ENCCs) migration during development. Acts as an activator of PP1. During neural tube closure, localizes to the ventral neural tube and activates PP1, leading to down-regulate cell proliferation within cranial neural tissue and the neural retina. Also acts as a regulator of migration of enteric neural crest cells (ENCCs) by activating PP1, leading to repression of the integrin signaling through the rho/rock pathway. The chain is Phosphatase and actin regulator 4A (phactr4a) from Danio rerio (Zebrafish).